Consider the following 314-residue polypeptide: 2,3-dihydroxyphenylpropionate/2,3-dihydroxicinnamic acid 1,2-dioxygenase (314 aa).

The active-site Proton donor is His-115. The active-site Proton acceptor is the His-179.

It belongs to the LigB/MhpB extradiol dioxygenase family. In terms of assembly, homotetramer. The cofactor is Fe(2+).

The catalysed reaction is 3-(2,3-dihydroxyphenyl)propanoate + O2 = (2Z,4E)-2-hydroxy-6-oxonona-2,4-dienedioate + H(+). The enzyme catalyses (2E)-3-(2,3-dihydroxyphenyl)prop-2-enoate + O2 = (2Z,4E,7E)-2-hydroxy-6-oxonona-2,4,7-trienedioate + H(+). It functions in the pathway aromatic compound metabolism; 3-phenylpropanoate degradation. Functionally, catalyzes the non-heme iron(II)-dependent oxidative cleavage of 2,3-dihydroxyphenylpropionic acid and 2,3-dihydroxicinnamic acid into 2-hydroxy-6-ketononadienedioate and 2-hydroxy-6-ketononatrienedioate, respectively. This chain is 2,3-dihydroxyphenylpropionate/2,3-dihydroxicinnamic acid 1,2-dioxygenase, found in Escherichia coli O81 (strain ED1a).